The chain runs to 189 residues: Elongation factor P (189 aa).

This sequence belongs to the elongation factor P family.

The protein localises to the cytoplasm. The protein operates within protein biosynthesis; polypeptide chain elongation. Involved in peptide bond synthesis. Stimulates efficient translation and peptide-bond synthesis on native or reconstituted 70S ribosomes in vitro. Probably functions indirectly by altering the affinity of the ribosome for aminoacyl-tRNA, thus increasing their reactivity as acceptors for peptidyl transferase. The sequence is that of Elongation factor P from Ehrlichia ruminantium (strain Gardel).